We begin with the raw amino-acid sequence, 349 residues long: Nicotinate-nucleotide--dimethylbenzimidazole phosphoribosyltransferase (349 aa).

Residue Glu313 is the Proton acceptor of the active site.

The protein belongs to the CobT family.

It catalyses the reaction 5,6-dimethylbenzimidazole + nicotinate beta-D-ribonucleotide = alpha-ribazole 5'-phosphate + nicotinate + H(+). Its pathway is nucleoside biosynthesis; alpha-ribazole biosynthesis; alpha-ribazole from 5,6-dimethylbenzimidazole: step 1/2. Its function is as follows. Catalyzes the synthesis of alpha-ribazole-5'-phosphate from nicotinate mononucleotide (NAMN) and 5,6-dimethylbenzimidazole (DMB). In Mycobacterium avium (strain 104), this protein is Nicotinate-nucleotide--dimethylbenzimidazole phosphoribosyltransferase.